A 361-amino-acid chain; its full sequence is Probable galacturonosyltransferase-like 5 (361 aa).

At 1–6 (MHWITR) the chain is on the cytoplasmic side. A helical; Signal-anchor for type II membrane protein membrane pass occupies residues 7 to 27 (FSAFFSAALAMILLSPSLQSF). Over 28-361 (SPAAAIRSSH…APYDLYKHSH (334 aa)) the chain is Lumenal. N-linked (GlcNAc...) asparagine glycosylation is found at asparagine 218 and asparagine 234.

Belongs to the glycosyltransferase 8 family.

It localises to the golgi apparatus membrane. Its pathway is glycan metabolism; pectin biosynthesis. May be involved in pectin and/or xylans biosynthesis in cell walls. In Arabidopsis thaliana (Mouse-ear cress), this protein is Probable galacturonosyltransferase-like 5 (GATL5).